Reading from the N-terminus, the 269-residue chain is Zinc finger protein SNAI2 (269 aa).

The interval 1–20 (MPRSFLVKKHFNASKKPNYS) is SNAG domain. The segment at 81-117 (SSSLGRVSPPPSSDTSSKDHSGSESPISDEEERLQPK) is disordered. C2H2-type zinc fingers lie at residues 129–151 (FQCN…KQLH), 160–182 (FSCK…IRTH), 186–208 (CVCK…IRTH), and 214–236 (FSCP…LQTH). The C2H2-type 5; atypical zinc finger occupies 242 to 265 (YQCKNCSKTFSRMSLLHKHEESGC).

It belongs to the snail C2H2-type zinc-finger protein family. Interacts (via SNAG domain) with LIMD1 (via LIM domains), WTIP (via LIM domains) and AJUBA (via LIM domains). Interacts (via zinc fingers) with KPNA2, KPNB1, and TNPO1. May interact (via zinc fingers) with IPO7. Post-translationally, phosphorylated by GSK3B. Once phosphorylated, it becomes a target for ubiquitination. In terms of processing, ubiquitinated by the SCF(FBXO11) complex; ubiquitination requires previous GSK3B-mediated SNAI2 phosphorylation.

Its subcellular location is the nucleus. It is found in the cytoplasm. In terms of biological role, transcriptional repressor that modulates both activator-dependent and basal transcription. Involved in the generation and migration of neural crest cells. Plays a role in mediating RAF1-induced transcriptional repression of the TJ protein, occludin (OCLN) and subsequent oncogenic transformation of epithelial cells. Represses BRCA2 expression by binding to its E2-box-containing silencer and recruiting CTBP1 and HDAC1 in breast cells. In epidermal keratinocytes, binds to the E-box in ITGA3 promoter and represses its transcription. Involved in the regulation of ITGB1 and ITGB4 expression and cell adhesion and proliferation in epidermal keratinocytes. Binds to E-box2 domain of BSG and activates its expression during TGFB1-induced epithelial-mesenchymal transition (EMT) in hepatocytes. Represses E-Cadherin/CDH1 transcription via E-box elements. Involved in osteoblast maturation. Binds to RUNX2 and SOC9 promoters and may act as a positive and negative transcription regulator, respectively, in osteoblasts. Binds to CXCL12 promoter via E-box regions in mesenchymal stem cells and osteoblasts. Plays an essential role in TWIST1-induced EMT and its ability to promote invasion and metastasis. This chain is Zinc finger protein SNAI2 (Snai2), found in Mus musculus (Mouse).